A 185-amino-acid polypeptide reads, in one-letter code: Ribosome-recycling factor (185 aa).

Belongs to the RRF family.

It localises to the cytoplasm. Its function is as follows. Responsible for the release of ribosomes from messenger RNA at the termination of protein biosynthesis. May increase the efficiency of translation by recycling ribosomes from one round of translation to another. This is Ribosome-recycling factor from Syntrophobacter fumaroxidans (strain DSM 10017 / MPOB).